A 398-amino-acid polypeptide reads, in one-letter code: 4-hydroxy-3-methylbut-2-en-1-yl diphosphate synthase (ferredoxin) (398 aa).

Positions 306, 309, 340, and 347 each coordinate [4Fe-4S] cluster.

Belongs to the IspG family. It depends on [4Fe-4S] cluster as a cofactor.

The catalysed reaction is (2E)-4-hydroxy-3-methylbut-2-enyl diphosphate + 2 oxidized [2Fe-2S]-[ferredoxin] + H2O = 2-C-methyl-D-erythritol 2,4-cyclic diphosphate + 2 reduced [2Fe-2S]-[ferredoxin] + H(+). It participates in isoprenoid biosynthesis; isopentenyl diphosphate biosynthesis via DXP pathway; isopentenyl diphosphate from 1-deoxy-D-xylulose 5-phosphate: step 5/6. In terms of biological role, converts 2C-methyl-D-erythritol 2,4-cyclodiphosphate (ME-2,4cPP) into 1-hydroxy-2-methyl-2-(E)-butenyl 4-diphosphate. The sequence is that of 4-hydroxy-3-methylbut-2-en-1-yl diphosphate synthase (ferredoxin) from Parasynechococcus marenigrum (strain WH8102).